Here is a 214-residue protein sequence, read N- to C-terminus: Riboflavin kinase (214 aa).

Positions 1–27 (MRPDRPRDPVTGPDEGPESPYPIRMSG) are disordered. The Mg(2+) site is built by Thr44 and Asn46. The active-site Nucleophile is the Glu101.

It belongs to the flavokinase family. Zn(2+) is required as a cofactor. It depends on Mg(2+) as a cofactor.

The enzyme catalyses riboflavin + ATP = FMN + ADP + H(+). It functions in the pathway cofactor biosynthesis; FMN biosynthesis; FMN from riboflavin (ATP route): step 1/1. Catalyzes the phosphorylation of riboflavin (vitamin B2) to form flavin mononucleotide (FMN) coenzyme. This is Riboflavin kinase (fmn1) from Aspergillus niger (strain ATCC MYA-4892 / CBS 513.88 / FGSC A1513).